The sequence spans 207 residues: Glycerol-3-phosphate acyltransferase (207 aa).

A run of 5 helical transmembrane segments spans residues 4–24 (VVATVIFALAAYLIGSISFAV), 58–78 (ILTLLGDAAKGGLAVWLAQWL), 86–106 (ETGIALVVIAVFLGHLFPVFH), 120–140 (ILLALNVWLGLATLATWLIIA), and 162–182 (VLMNGFDWIAGAVALMAVLLI).

Belongs to the PlsY family. As to quaternary structure, probably interacts with PlsX.

The protein resides in the cell inner membrane. It catalyses the reaction an acyl phosphate + sn-glycerol 3-phosphate = a 1-acyl-sn-glycero-3-phosphate + phosphate. It participates in lipid metabolism; phospholipid metabolism. Its function is as follows. Catalyzes the transfer of an acyl group from acyl-phosphate (acyl-PO(4)) to glycerol-3-phosphate (G3P) to form lysophosphatidic acid (LPA). This enzyme utilizes acyl-phosphate as fatty acyl donor, but not acyl-CoA or acyl-ACP. This chain is Glycerol-3-phosphate acyltransferase, found in Ralstonia pickettii (strain 12J).